The primary structure comprises 231 residues: Large ribosomal subunit protein uL1 (231 aa).

The protein belongs to the universal ribosomal protein uL1 family. Part of the 50S ribosomal subunit.

Functionally, binds directly to 23S rRNA. The L1 stalk is quite mobile in the ribosome, and is involved in E site tRNA release. In terms of biological role, protein L1 is also a translational repressor protein, it controls the translation of the L11 operon by binding to its mRNA. The sequence is that of Large ribosomal subunit protein uL1 from Acinetobacter baylyi (strain ATCC 33305 / BD413 / ADP1).